A 1098-amino-acid polypeptide reads, in one-letter code: Gramicidin S synthase 1 (1098 aa).

Residues 538–612 enclose the Carrier domain; that stretch reads APRNEIEETL…QLVHYIKDSK (75 aa). Residue serine 573 is modified to O-(pantetheine 4'-phosphoryl)serine.

Belongs to the ATP-dependent AMP-binding enzyme family. In terms of assembly, large multienzyme complex of GrsA and GrsB. Requires pantetheine 4'-phosphate as cofactor.

The catalysed reaction is L-phenylalanine + ATP + H2O = D-phenylalanine + AMP + diphosphate + H(+). Its pathway is antibiotic biosynthesis; gramicidin S biosynthesis. In the first step of peptide synthesis this enzyme activates phenylalanine and racemizes it to the D-isomer. This chain is Gramicidin S synthase 1 (grsA), found in Brevibacillus brevis (Bacillus brevis).